We begin with the raw amino-acid sequence, 443 residues long: C4-dicarboxylate transport protein (443 aa).

The next 9 helical transmembrane spans lie at 17–37 (PFYS…ILLG), 57–77 (LVKM…IAGM), 92–112 (LYFL…ANVV), 139–159 (EQSI…GAFA), 161–181 (GDIL…AMVG), 201–221 (LVGI…AFTI), 234–254 (MLIG…LGAV), 320–340 (IYMT…LSWG), and 368–388 (AATL…ILGI).

This sequence belongs to the dicarboxylate/amino acid:cation symporter (DAACS) (TC 2.A.23) family.

Its subcellular location is the cell inner membrane. Functionally, responsible for the transport of dicarboxylates such as succinate, fumarate, and malate from the periplasm across the membrane. In Rhizobium etli (strain ATCC 51251 / DSM 11541 / JCM 21823 / NBRC 15573 / CFN 42), this protein is C4-dicarboxylate transport protein.